A 619-amino-acid chain; its full sequence is Coagulation factor X-activating enzyme heavy chain (619 aa).

Positions Met1–Ser20 are cleaved as a signal peptide. Residues Ile21 to Gln188 constitute a propeptide that is removed on maturation. Positions Ile199–Pro393 constitute a Peptidase M12B domain. Residues Cys215 and Cys251 are joined by a disulfide bond. 2 N-linked (GlcNAc...) (complex) asparagine glycosylation sites follow: Asn216 and Asn257. Disulfide bonds link Cys308–Cys388, Cys348–Cys372, and Cys350–Cys355. His333 contacts Zn(2+). The active site involves Glu334. His337 and His343 together coordinate Zn(2+). 2 N-linked (GlcNAc...) (complex) asparagine glycosylation sites follow: Asn351 and Asn371. The region spanning Pro401–Asn487 is the Disintegrin domain. Ca(2+) is bound by residues Val403, Asn406, Ile408, Glu410, Glu413, and Asp416. 14 cysteine pairs are disulfide-bonded: Cys404/Cys433, Cys415/Cys428, Cys417/Cys423, Cys427/Cys450, Cys441/Cys447, Cys446/Cys472, Cys459/Cys479, Cys466/Cys498, Cys491/Cys503, Cys510/Cys560, Cys525/Cys571, Cys538/Cys548, Cys555/Cys597, and Cys591/Cys603. The D/ECD-tripeptide signature appears at Glu465–Asp467. Asp467, Val468, Glu470, Asp482, and Gln483 together coordinate Ca(2+).

It belongs to the venom metalloproteinase (M12B) family. P-III subfamily. P-IIId sub-subfamily. In terms of assembly, heterotrimer; disulfide-linked. The heterotrimer consists of 1 heavy chain and 2 light chains (lectins): LC1 and LC2. The cofactor is Zn(2+). In terms of processing, N-glycosylated; probably required for conformation. Removal of easily accessible sugars does not change its functional capacity, but removal of the core sugars with N-glycanase causes a virtually complete loss of enzyme activity, apparently as a result of major conformational changes in the molecule. Not O-glycosylated. In terms of tissue distribution, expressed by the venom gland.

It is found in the secreted. The enzyme catalyses Specifically activates several components of the blood clotting system, including coagulation factor X, coagulation factor IX and protein C by cleavage of Arg-|-Xaa bonds. Has no action on insulin B chain.. Functionally, catalytic subunit of blood coagulation factor X-activating enzyme. Activates coagulation factor X (F10) by cleaving the Arg-Ile bond and is also able to activate coagulation factor IX (F9) and protein S (PROS1) by specific cleavage of Arg-Ile and Arg-Val bonds. The chain is Coagulation factor X-activating enzyme heavy chain from Daboia siamensis (Eastern Russel's viper).